The sequence spans 430 residues: Adenylosuccinate synthetase (430 aa).

Residues 12–18 (GDEGKGK) and 40–42 (GHT) each bind GTP. The active-site Proton acceptor is Asp-13. Mg(2+)-binding residues include Asp-13 and Gly-40. IMP-binding positions include 13 to 16 (DEGK), 38 to 41 (NAGH), Thr-130, Arg-144, Gln-224, Thr-239, and Arg-303. The Proton donor role is filled by His-41. Position 299 to 305 (299 to 305 (VNTGRKR)) interacts with substrate. Residues Arg-305, 331 to 333 (KLD), and 413 to 415 (STS) each bind GTP.

It belongs to the adenylosuccinate synthetase family. As to quaternary structure, homodimer. Mg(2+) is required as a cofactor.

It localises to the cytoplasm. It catalyses the reaction IMP + L-aspartate + GTP = N(6)-(1,2-dicarboxyethyl)-AMP + GDP + phosphate + 2 H(+). It functions in the pathway purine metabolism; AMP biosynthesis via de novo pathway; AMP from IMP: step 1/2. Plays an important role in the de novo pathway of purine nucleotide biosynthesis. Catalyzes the first committed step in the biosynthesis of AMP from IMP. The sequence is that of Adenylosuccinate synthetase from Nitrobacter hamburgensis (strain DSM 10229 / NCIMB 13809 / X14).